Reading from the N-terminus, the 255-residue chain is 5'-nucleotidase SurE (255 aa).

Aspartate 8, aspartate 9, serine 40, and asparagine 93 together coordinate a divalent metal cation.

Belongs to the SurE nucleotidase family. The cofactor is a divalent metal cation.

It is found in the cytoplasm. The catalysed reaction is a ribonucleoside 5'-phosphate + H2O = a ribonucleoside + phosphate. Nucleotidase that shows phosphatase activity on nucleoside 5'-monophosphates. This is 5'-nucleotidase SurE from Bradyrhizobium sp. (strain BTAi1 / ATCC BAA-1182).